A 438-amino-acid polypeptide reads, in one-letter code: Serine/threonine-protein kinase VIK (438 aa).

The interval 1–31 is disordered; sequence MSSDSPAAGDGGEQAAAGTSVPSPSYDKQKE. ANK repeat units lie at residues 36–65, 70–99, and 103–133; these read SRTSLILWHAHQNDAAAVRKLLEEDPTLVH, DKRTPLHVASLHGWIDVVKCLLEFGADVNA, and WKNTPLADAEGARKQKMIELLKSHGGLSYGQ. The Protein kinase domain maps to 162–427; that stretch reads FSNAAMIGKG…KRLEKIKETL (266 aa). ATP-binding positions include 168–176 and Lys-189; that span reads IGKGSFGEI. Asp-285 functions as the Proton acceptor in the catalytic mechanism.

The protein belongs to the protein kinase superfamily. Ser/Thr protein kinase family. In terms of assembly, interacts with BRL2. Binds to MSSP1/TMT1 at the tonoplast. Post-translationally, phosphorylated. Restricted to mature vascular cells. Mostly expressed in mature leaves and seeds, and, to a lower level, in seedlings, young leaves, flowers and siliques.

It localises to the vacuole. It carries out the reaction L-seryl-[protein] + ATP = O-phospho-L-seryl-[protein] + ADP + H(+). The enzyme catalyses L-threonyl-[protein] + ATP = O-phospho-L-threonyl-[protein] + ADP + H(+). Serine/threonine protein kinase which may function as an adapter protein for BRL2. Required during vascular development for the establishment of vein pattern in foliar organs. Mediates MSSP1/TMT1 phosphorylation and activation to enhance its carrier activity and consequently vacuolar sugar accumulation, particularly in response to cold. This chain is Serine/threonine-protein kinase VIK, found in Arabidopsis thaliana (Mouse-ear cress).